The sequence spans 388 residues: tRNA (guanine-N(7)-)-methyltransferase (388 aa).

Residues Glu129, Glu154, and Asp181 each contribute to the S-adenosyl-L-methionine site. Substrate-binding residues include Lys207 and Asp237.

This sequence belongs to the class I-like SAM-binding methyltransferase superfamily. TrmB family.

It carries out the reaction guanosine(46) in tRNA + S-adenosyl-L-methionine = N(7)-methylguanosine(46) in tRNA + S-adenosyl-L-homocysteine. Its pathway is tRNA modification; N(7)-methylguanine-tRNA biosynthesis. In terms of biological role, catalyzes the formation of N(7)-methylguanine at position 46 (m7G46) in tRNA. The protein is tRNA (guanine-N(7)-)-methyltransferase of Wolinella succinogenes (strain ATCC 29543 / DSM 1740 / CCUG 13145 / JCM 31913 / LMG 7466 / NCTC 11488 / FDC 602W) (Vibrio succinogenes).